The chain runs to 53 residues: MENFILLIVGFIYGAGGVLLYSVYKEVREMKQIFEQILSQMQTKDYEETNDFM.

The helical transmembrane segment at 4–24 (FILLIVGFIYGAGGVLLYSVY) threads the bilayer.

The protein resides in the host membrane. This is an uncharacterized protein from Acidianus bottle-shaped virus (isolate Italy/Pozzuoli) (ABV).